We begin with the raw amino-acid sequence, 175 residues long: Ribosome maturation factor RimM (175 aa).

Positions 94–166 (SDSWYEHELI…FIRLVPPGGL (73 aa)) constitute a PRC barrel domain.

It belongs to the RimM family. As to quaternary structure, binds ribosomal protein uS19.

The protein resides in the cytoplasm. An accessory protein needed during the final step in the assembly of 30S ribosomal subunit, possibly for assembly of the head region. Essential for efficient processing of 16S rRNA. May be needed both before and after RbfA during the maturation of 16S rRNA. It has affinity for free ribosomal 30S subunits but not for 70S ribosomes. In Renibacterium salmoninarum (strain ATCC 33209 / DSM 20767 / JCM 11484 / NBRC 15589 / NCIMB 2235), this protein is Ribosome maturation factor RimM.